We begin with the raw amino-acid sequence, 958 residues long: Probable protein phosphatase DDB_G0282105 (958 aa).

A run of 2 helical transmembrane segments spans residues 2–22 and 26–46; these read VLMM…SLMV and FLEF…ILFF. Positions 142 to 330 form a coiled coil; sequence SASQQSELTN…KDKERERSSS (189 aa). Over residues 312–328 the composition is skewed to basic and acidic residues; the sequence is QEKEKQKLEKDKERERS. 5 disordered regions span residues 312 to 361, 380 to 421, 445 to 475, 491 to 525, and 619 to 659; these read QEKE…PIPI, SVNG…PKFK, HLGS…TTPI, ITSP…ILSP, and NNNN…NDNK. Composition is skewed to low complexity over residues 329–361, 390–401, 452–475, 491–515, and 619–655; these read SSFS…PIPI, SSVSPPSSSYLR, TPAN…TTPI, ITSP…SSSS, and NNNN…NNNK. The stretch at 613 to 666 forms a coiled coil; it reads NFLKTNNNNNKNNIEESNNNNNNNNNNNNNNNNNNNNNNNNNKNDNKEVNSKLE. Residues 675–958 enclose the PPM-type phosphatase domain; that stretch reads KIGLRRAKKK…DNVTVIIVKL (284 aa). Mn(2+) is bound by residues D722, G723, D905, and D949.

It in the C-terminal section; belongs to the PP2C family. It depends on Mg(2+) as a cofactor. Mn(2+) serves as cofactor.

Its subcellular location is the membrane. It carries out the reaction O-phospho-L-seryl-[protein] + H2O = L-seryl-[protein] + phosphate. The enzyme catalyses O-phospho-L-threonyl-[protein] + H2O = L-threonyl-[protein] + phosphate. This is Probable protein phosphatase DDB_G0282105 from Dictyostelium discoideum (Social amoeba).